Here is a 142-residue protein sequence, read N- to C-terminus: Large ribosomal subunit protein uL11 (142 aa).

The protein belongs to the universal ribosomal protein uL11 family. As to quaternary structure, part of the ribosomal stalk of the 50S ribosomal subunit. Interacts with L10 and the large rRNA to form the base of the stalk. L10 forms an elongated spine to which L12 dimers bind in a sequential fashion forming a multimeric L10(L12)X complex. In terms of processing, one or more lysine residues are methylated.

Forms part of the ribosomal stalk which helps the ribosome interact with GTP-bound translation factors. This is Large ribosomal subunit protein uL11 from Xanthomonas axonopodis pv. citri (strain 306).